Here is a 254-residue protein sequence, read N- to C-terminus: MGSLLSPEANAEVPREALSFHGNATGAQVHLDDQRSTARRRSTFHDGIVFSQRPVWPGERVALRVLRHEEGWCGGLRVGFTRLDPAQVAASCLPPFVCPDLEEQSPTWAALLPEGFVRAGNVVCFWVNRRGWLFAKVNAGRPLLLRKDVLVQGAPLWAVMDVYGTTKAIELLDPKANAWIRSGEPVPESEVISGEECVICFHNTANTRLMPCGHSHFCGSCAWHIFKDTARCPICRWQIEEVAVVSSLKAEEGS.

Residues 17–174 (ALSFHGNATG…TTKAIELLDP (158 aa)) enclose the NHR domain. The segment at 197-236 (CVICFHNTANTRLMPCGHSHFCGSCAWHIFKDTARCPICR) adopts an RING-type zinc-finger fold.

Expressed in alveolar epithelial type II cells.

It is found in the cytoplasm. The enzyme catalyses S-ubiquitinyl-[E2 ubiquitin-conjugating enzyme]-L-cysteine + [acceptor protein]-L-lysine = [E2 ubiquitin-conjugating enzyme]-L-cysteine + N(6)-ubiquitinyl-[acceptor protein]-L-lysine.. The protein operates within protein modification; protein ubiquitination. Its function is as follows. E3 ubiquitin-protein ligase that plays a role in various biological processes such as lung development or innate immunity. Seems to utilize UBE2E1. Promotes innate antiviral response by catalyzing 'Lys-63'-linked ubiquitination of IRF7. Plays an essential role in TLR4-mediated activation of MAPK pathways by promoting 'Lys-48'-linked polyubiquitination of the phosphatase DUSP1/MKP1. The sequence is that of E3 ubiquitin-protein ligase NEURL3 (Neurl3) from Mus musculus (Mouse).